The chain runs to 529 residues: O-acetylstemmadenine oxidase (529 aa).

Positions 1 to 23 (MIKKVPIVLSIFCFLLLLSSSHG) are cleaved as a signal peptide. A disulfide bridge links Cys32 with Cys92. The N-linked (GlcNAc...) asparagine glycan is linked to Asn52. In terms of domain architecture, FAD-binding PCMH-type spans 70–244 (KSPKPLAIIT…VSWKVKLVKV (175 aa)). Residues 102–108 (IRSGGAD), Ser113, 168–169 (VS), 173–177 (GIGGH), and Phe183 each bind FAD. A glycan (N-linked (GlcNAc...) asparagine) is linked at Asn293. Trp465 provides a ligand contact to FAD.

This sequence belongs to the oxygen-dependent FAD-linked oxidoreductase family. Requires FAD as cofactor. As to expression, expressed in leaf epidermis.

The protein resides in the endoplasmic reticulum. It localises to the vacuole. It is found in the vesicle. It carries out the reaction O-acetyl-15alpha-stemmadenine + O2 = precondylocarpine acetate + H2O2. The protein operates within alkaloid biosynthesis. Functionally, component of the seco-iridoid and derivatives monoterpenoid indole alkaloids (MIAs, e.g. vinblastine, catharanthine, tabersonine, vincadifformine, vindoline, vincristine, quinine and strychnine) biosynthesis pathway. Converts O-acetylstemmadenine (OAS) to reactive acetylated intermediates, likely dihydroprecondylocarpine acetate. The protein is O-acetylstemmadenine oxidase of Catharanthus roseus (Madagascar periwinkle).